Reading from the N-terminus, the 672-residue chain is DNA ligase (672 aa).

NAD(+)-binding positions include 34-38 (DSVYD), 83-84 (SL), and Glu113. The active-site N6-AMP-lysine intermediate is Lys115. The NAD(+) site is built by Arg136, Glu170, Lys286, and Lys310. Residues Cys404, Cys407, Cys422, and Cys427 each coordinate Zn(2+). A BRCT domain is found at 592 to 672 (STDSSFNGLR…EFIQQMEEES (81 aa)).

This sequence belongs to the NAD-dependent DNA ligase family. LigA subfamily. Requires Mg(2+) as cofactor. The cofactor is Mn(2+).

The enzyme catalyses NAD(+) + (deoxyribonucleotide)n-3'-hydroxyl + 5'-phospho-(deoxyribonucleotide)m = (deoxyribonucleotide)n+m + AMP + beta-nicotinamide D-nucleotide.. Functionally, DNA ligase that catalyzes the formation of phosphodiester linkages between 5'-phosphoryl and 3'-hydroxyl groups in double-stranded DNA using NAD as a coenzyme and as the energy source for the reaction. It is essential for DNA replication and repair of damaged DNA. This is DNA ligase from Ligilactobacillus salivarius (strain UCC118) (Lactobacillus salivarius).